A 386-amino-acid chain; its full sequence is Phosphoglycerate kinase (386 aa).

Substrate is bound by residues 21–23 (DLN), arginine 36, 59–62 (HLGR), arginine 112, and arginine 145. Residues lysine 196, glutamate 313, and 339–342 (GGDT) each bind ATP.

It belongs to the phosphoglycerate kinase family. As to quaternary structure, monomer.

The protein localises to the cytoplasm. The enzyme catalyses (2R)-3-phosphoglycerate + ATP = (2R)-3-phospho-glyceroyl phosphate + ADP. It participates in carbohydrate degradation; glycolysis; pyruvate from D-glyceraldehyde 3-phosphate: step 2/5. This is Phosphoglycerate kinase from Haemophilus influenzae (strain 86-028NP).